A 698-amino-acid polypeptide reads, in one-letter code: Elongation factor G (698 aa).

The 276-residue stretch at 10-285 folds into the tr-type G domain; it reads ASTRNIGIMA…AVVDFLPNPL (276 aa). GTP is bound by residues 19-26, 83-87, and 137-140; these read AHIDAGKT, DTPGH, and NKMD.

This sequence belongs to the TRAFAC class translation factor GTPase superfamily. Classic translation factor GTPase family. EF-G/EF-2 subfamily.

It localises to the cytoplasm. Its function is as follows. Catalyzes the GTP-dependent ribosomal translocation step during translation elongation. During this step, the ribosome changes from the pre-translocational (PRE) to the post-translocational (POST) state as the newly formed A-site-bound peptidyl-tRNA and P-site-bound deacylated tRNA move to the P and E sites, respectively. Catalyzes the coordinated movement of the two tRNA molecules, the mRNA and conformational changes in the ribosome. This Frankia alni (strain DSM 45986 / CECT 9034 / ACN14a) protein is Elongation factor G.